Consider the following 62-residue polypeptide: Protein DsrB (62 aa).

The protein belongs to the DsrB family.

The sequence is that of Protein DsrB from Enterobacter sp. (strain 638).